Consider the following 157-residue polypeptide: Crossover junction endodeoxyribonuclease RuvC (157 aa).

Active-site residues include D7, E66, and D139. Mg(2+) contacts are provided by D7, E66, and D139.

The protein belongs to the RuvC family. In terms of assembly, homodimer which binds Holliday junction (HJ) DNA. The HJ becomes 2-fold symmetrical on binding to RuvC with unstacked arms; it has a different conformation from HJ DNA in complex with RuvA. In the full resolvosome a probable DNA-RuvA(4)-RuvB(12)-RuvC(2) complex forms which resolves the HJ. Requires Mg(2+) as cofactor.

Its subcellular location is the cytoplasm. It catalyses the reaction Endonucleolytic cleavage at a junction such as a reciprocal single-stranded crossover between two homologous DNA duplexes (Holliday junction).. The RuvA-RuvB-RuvC complex processes Holliday junction (HJ) DNA during genetic recombination and DNA repair. Endonuclease that resolves HJ intermediates. Cleaves cruciform DNA by making single-stranded nicks across the HJ at symmetrical positions within the homologous arms, yielding a 5'-phosphate and a 3'-hydroxyl group; requires a central core of homology in the junction. The consensus cleavage sequence is 5'-(A/T)TT(C/G)-3'. Cleavage occurs on the 3'-side of the TT dinucleotide at the point of strand exchange. HJ branch migration catalyzed by RuvA-RuvB allows RuvC to scan DNA until it finds its consensus sequence, where it cleaves and resolves the cruciform DNA. The protein is Crossover junction endodeoxyribonuclease RuvC of Campylobacter curvus (strain 525.92).